The sequence spans 318 residues: Sol locus transcriptional repressor (318 aa).

4 TPR repeats span residues Ala-65–Thr-98, Ile-99–Val-132, Gly-133–Asn-166, and Ser-167–Lys-199.

In terms of biological role, transcriptional repressor of the sol locus (adhE/aad, ctfA, ctfB and adc) genes for butanol and acetone formation. The sequence is that of Sol locus transcriptional repressor (solR) from Clostridium acetobutylicum (strain ATCC 824 / DSM 792 / JCM 1419 / IAM 19013 / LMG 5710 / NBRC 13948 / NRRL B-527 / VKM B-1787 / 2291 / W).